The chain runs to 276 residues: Triple specificity protein phosphatase PtpB (276 aa).

Catalysis depends on Cys-160, which acts as the Phosphocysteine intermediate. Positions 232–250 (LGVRAEYLAAARQTIDETY) are UIM-like region.

The protein belongs to the protein-tyrosine phosphatase family. Interacts (via UIM-like region) with host ubiquitin; activating the phosphatidylinositol phosphate phosphatase activity.

It is found in the secreted. Its subcellular location is the host cytoplasm. It localises to the host cell membrane. The enzyme catalyses O-phospho-L-tyrosyl-[protein] + H2O = L-tyrosyl-[protein] + phosphate. The catalysed reaction is O-phospho-L-seryl-[protein] + H2O = L-seryl-[protein] + phosphate. It carries out the reaction O-phospho-L-threonyl-[protein] + H2O = L-threonyl-[protein] + phosphate. It catalyses the reaction 1,2-dioctanoyl-sn-glycero-3-phospho-(1-D-myo-inositol-3-phosphate) + H2O = 1,2-dioctanoyl-sn-glycero-3-phospho-(1D-myo-inositol) + phosphate. The enzyme catalyses 1,2-dioctanoyl-sn-glycero-3-phospho-(1-D-myo-inositol-4-phosphate) + H2O = 1,2-dioctanoyl-sn-glycero-3-phospho-(1D-myo-inositol) + phosphate. The catalysed reaction is 1,2-dioctanoyl-sn-glycero-3-phospho-(1D-myo-inositol-5-phosphate) + H2O = 1,2-dioctanoyl-sn-glycero-3-phospho-(1D-myo-inositol) + phosphate. Its activity is regulated as follows. Binding to host ubiquitin is required to activate the phosphatidylinositol phosphate phosphatase activity. Phosphatase activity is inhibited by sodium orthovanadate, a specific inhibitor of tyrosine phosphatases, but not by okadaic acid, an inhibitor of serine/threonine phosphatases. Inhibition of the enzyme reduces mycobacterial survival in infected macrophages. Inhibitors also enhance killing efficacy by first-line antibiotics. Essential virulence factor that promotes mycobacterial survival within host macrophages. Acts as a phosphatase that possesses triple substrate specificity toward phosphotyrosine, phosphoserine/threonine and phosphoinositides. Supports mycobacteria survival during infection by modulating the normal host signaling pathways, attenuating the bactericidal immune responses and promoting the host cell survival. Inhibits host pyroptosis by disrupting the membrane localization of host gasdermin-D (GSDMD): acts by catalyzing dephosphorylation of phosphatidylinositol (4,5)-bisphosphate and phosphatidylinositol 4-phosphate, thereby inhibiting the membrane targeting of GSDMD and subsequent cytokine release and pyroptosis. Inhibits host inflammatory responses and apoptosis through impeding the NF-kappa-B and MAPK signal pathways and TP53/p53 expression in the macrophage. Blocks the IL6/IL-6 production by down-regulating ERK1/2, p38 and p65 activity. Prevents macrophage cell death by activating the Akt pathway and blocking caspase 3 activity. Reduces the expression of iNOS in activated macrophages and inhibits the generation of destroying reactive nitrogen intermediate NO. The protein is Triple specificity protein phosphatase PtpB of Mycobacterium tuberculosis (strain ATCC 25618 / H37Rv).